The chain runs to 918 residues: Isoleucine--tRNA ligase (918 aa).

The 'HIGH' region motif lies at proline 57–threonine 67. An L-isoleucyl-5'-AMP-binding site is contributed by glutamate 552. The short motif at lysine 593–serine 597 is the 'KMSKS' region element. An ATP-binding site is contributed by lysine 596. 4 residues coordinate Zn(2+): cysteine 886, cysteine 889, cysteine 906, and cysteine 909.

This sequence belongs to the class-I aminoacyl-tRNA synthetase family. IleS type 1 subfamily. As to quaternary structure, monomer. Zn(2+) is required as a cofactor.

Its subcellular location is the cytoplasm. The enzyme catalyses tRNA(Ile) + L-isoleucine + ATP = L-isoleucyl-tRNA(Ile) + AMP + diphosphate. In terms of biological role, catalyzes the attachment of isoleucine to tRNA(Ile). As IleRS can inadvertently accommodate and process structurally similar amino acids such as valine, to avoid such errors it has two additional distinct tRNA(Ile)-dependent editing activities. One activity is designated as 'pretransfer' editing and involves the hydrolysis of activated Val-AMP. The other activity is designated 'posttransfer' editing and involves deacylation of mischarged Val-tRNA(Ile). The chain is Isoleucine--tRNA ligase from Thermotoga neapolitana (strain ATCC 49049 / DSM 4359 / NBRC 107923 / NS-E).